A 545-amino-acid chain; its full sequence is Tripartite motif-containing 55 (545 aa).

Residues 26–82 form an RING-type zinc finger; that stretch reads CPICLEMFTKPVVILPCQHNLCRKCASDIFQASNPYLPTRGGTTVASGGRFRCPSCR. The B box-type zinc finger occupies 119–161; sequence LDQPMCEEHEEERINIYCLNCEVPTCSLCKVFGAHKDCQVAPL. Zn(2+)-binding residues include C124, H127, C147, and H153. The COS domain maps to 269 to 327; that stretch reads MDEPEMAVFLQNAKTLLQKIVEASKAFQMEKLEQGYEIMSNFTVNLNREEKIIREIDFS. Disordered regions lie at residues 324–352, 359–378, and 417–532; these read IDFSREEEEEEDAGEIDEEGEGEDAVEVE, IASSGEEESLEKAAEPSQLP, and SQQT…EPAR. Positions 328–352 are enriched in acidic residues; it reads REEEEEEDAGEIDEEGEGEDAVEVE. Polar residues predominate over residues 417–428; sequence SQQTTQSETSGP. Residues 474 to 485 show a composition bias toward low complexity; the sequence is SSVQSAEVAEAA. Polar residues predominate over residues 486 to 506; sequence TNEQAAVSGKESSSTAATSQI.

Targeted for degradation through the proteasomal and lysosomal pathways in the presence of SUMO3. In terms of tissue distribution, widely expressed in various tissues, besides skeletal muscle and heart, such as brain, lung, liver, spleen and kidney.

The protein localises to the nucleus. The protein resides in the cytoplasm. It carries out the reaction S-ubiquitinyl-[E2 ubiquitin-conjugating enzyme]-L-cysteine + [acceptor protein]-L-lysine = [E2 ubiquitin-conjugating enzyme]-L-cysteine + N(6)-ubiquitinyl-[acceptor protein]-L-lysine.. Its function is as follows. E3 ubiquitin ligase that plays an important role in regulating cardiac development and contractility, muscle growth, metabolism, and fiber-type differentiation. Acts as a critical factor that regulates cardiomyocyte size during development in concert with TRIM63 by regulating E2F1-mediated gene expression. Plays a role in apoptosis induction in cardiomyocytes by promoting ubiquitination of the DUSP1 phosphatase. Promotes non-canonical NF-kappa-B signaling and B-cell-mediated immune responses by mediating NFKB2 'Lys-48'-linked ubiquitination and processing. In turn, NFKB2 is further processed by valosin-containing protein/VCP, an ATPase that mediates ubiquitin-dependent protein degradation by the proteasome. May play a role in preventing macrophages from producing inflammatory factors and migrating by downregulating the level of nuclear NF-kappa-B subunit RELA. Modifies also PPARG via polyubiquitination and accelerates PPARG proteasomal degradation to inhibit its activity. The polypeptide is Tripartite motif-containing 55 (Trim55) (Mus musculus (Mouse)).